A 497-amino-acid chain; its full sequence is Guanosine-5'-triphosphate,3'-diphosphate pyrophosphatase (497 aa).

The protein belongs to the GppA/Ppx family. GppA subfamily.

It catalyses the reaction guanosine 3'-diphosphate 5'-triphosphate + H2O = guanosine 3',5'-bis(diphosphate) + phosphate + H(+). The protein operates within purine metabolism; ppGpp biosynthesis; ppGpp from GTP: step 2/2. Its function is as follows. Catalyzes the conversion of pppGpp to ppGpp. Guanosine pentaphosphate (pppGpp) is a cytoplasmic signaling molecule which together with ppGpp controls the 'stringent response', an adaptive process that allows bacteria to respond to amino acid starvation, resulting in the coordinated regulation of numerous cellular activities. This is Guanosine-5'-triphosphate,3'-diphosphate pyrophosphatase from Vibrio campbellii (strain ATCC BAA-1116).